Reading from the N-terminus, the 162-residue chain is Peptidyl-prolyl cis-trans isomerase (162 aa).

One can recognise a PPIase cyclophilin-type domain in the interval 5–161; that stretch reads FFDVIANGQP…ARIVIDKCGT (157 aa).

It belongs to the cyclophilin-type PPIase family. PPIase A subfamily.

The protein resides in the cytoplasm. It catalyses the reaction [protein]-peptidylproline (omega=180) = [protein]-peptidylproline (omega=0). With respect to regulation, binds cyclosporin A (CsA). CsA mediates some of its effects via an inhibitory action on PPIase. PPIases accelerate the folding of proteins. It catalyzes the cis-trans isomerization of proline imidic peptide bonds in oligopeptides. This chain is Peptidyl-prolyl cis-trans isomerase (ppi1), found in Schizosaccharomyces pombe (strain 972 / ATCC 24843) (Fission yeast).